A 1397-amino-acid polypeptide reads, in one-letter code: MSDKSNDGGENDSLPMDNININSIDDENNNDINNQDDNENNNNNNNNKNSDDNEENLKDYKNKKEDFGNIKMDTIDDRPTNNGILSPIDITSDGGDSVKTLSTTQSKKLDEGEKKEGEVGPQVPFFSLFRFAKPFDILLMIIGTIGALANGVSMPAISIVFGRLMNSFSPENLADPNFDLVETVTSNAMYFIYIGCGVFVCSYVEVAFWMLAGERQAVRCRKAYLKAILKQEIGWYDVTKSSELSTRISSDTLLFQEAIGEKIGNFLHHTSTFICGFIVGFVNGWQLTLVIFALTPLIAAAGAFMTKMMADLTKKGQDAYAKAGGVAEEKIGSIRTVSTFSGEPFEVKRYTERLKEALDIGTKKGIMNGIGIGLVFLVLFGTYSLSFWYGGKLIVDRKWNPVPDRPWQGGDVLTVFFSVIMGAMALGQASPNVASFANGRGAAFKIYEVVDRNSKIDPFSTEGRSIEETVQGNIEYRNIGFSYPSRPDVKIFNNFNLTIKKGTTVALVGDSGGGKSSVIGLLERFYDPDEGEVYLDGTNIKEINIHSLRRNIGLVSQEPVLFANSIAENIRYGNENATMDQIIEACKTANAHDFISALPEGYDTQVGEKGVQMSGGQKQRIAIARAMIKDPKILLLDEATSALDSQNELLVQQSIEKLMIGRTTIVIAHRLSTIQDADQIAVVKGGAIVEIGTHPELYALNGVYTQLVNRQQKGGDDGDKKKKKKSKESSKDESNNNIGPSSISIDKSIQSIGADSLETSTIGLVNDNDNKKKKKKEKKPQEKSVPIGRILKLSRGDWPHFLIGLVGATLNGAIMPVFSIIFSEILGIFQEQDTDELTRRSRNMALWFILLAVVAALANFIQIYCFTFIGEKLTFNLRRLSFESIMRQDIGWFDLTENSTGRLTANLATEATLVQGMTSQRLGLLIQNIVTIVAGLVIAFVSGWKLTLVVLACVPVIGFAGKVEMDFFQGFSQKGKEAYAECGQVASEAIGGIRTVSSFTCENKILEKFRQCLQKPIQMSFRKSNVSGLSFGFSQCTLFFIYTLTYWYGGKLVDSGEWPAKESTLETYCYNGEYANIGYTDEATCIKSFTTTEGFSMMMRVFFAIIMSAMGVGQSMAFMPDLGKAKLAAVAIFSLIDRVSEIDPFENKGQTLPEFKGDIEFKDIKFSYPSRPNKAVFQGFNLVIPHGKKVALVGNSGGGKSSVISLLERFYNPSQGSITIDGVNIKDLNLNWLRGNMGLVGQEPFLFSGTIFENIIYGKPDATMDEVVEAAKAANAHTFIESLPDAYHTQLGDKFTQLSGGQKQRVAIARAIIRNPKVLLLDEATSALDTVSEKVVQVALDNVSKGRTSIVIAHRLSTVIDADLIVVVKEGKVVELGTHETLLAENGFYAELVSRQM.

Residues M1 to G117 form a disordered region. Residues I24–E39 show a composition bias toward acidic residues. Residues D37–N69 are a coiled coil. Composition is skewed to basic and acidic residues over residues N49 to P79 and K107 to G117. 5 consecutive transmembrane segments (helical) span residues I137–I157, F191–L211, F273–A293, G369–Y389, and W407–G427. One can recognise an ABC transmembrane type-1 1 domain in the interval M140 to N438. The region spanning I474–R710 is the ABC transporter 1 domain. G509–S516 lines the ATP pocket. Disordered regions lie at residues R710–S744 and G763–K783. The segment covering N735–S744 has biased composition (low complexity). The next 6 helical transmembrane spans lie at F801 to I821, L846 to F866, L922 to S942, L948 to F968, G1028 to Y1048, and V1101 to D1121. One can recognise an ABC transmembrane type-1 2 domain in the interval F801–K1124. Residues I1159 to R1395 enclose the ABC transporter 2 domain. G1194–S1201 is a binding site for ATP.

The protein belongs to the ABC transporter superfamily. ABCB family. Multidrug resistance exporter (TC 3.A.1.201) subfamily.

It is found in the membrane. The chain is ABC transporter B family member 2 (abcB2) from Dictyostelium discoideum (Social amoeba).